A 195-amino-acid polypeptide reads, in one-letter code: Peptidyl-tRNA hydrolase (195 aa).

Tyrosine 17 serves as a coordination point for tRNA. The Proton acceptor role is filled by histidine 22. The tRNA site is built by phenylalanine 68, asparagine 70, and asparagine 116.

It belongs to the PTH family. In terms of assembly, monomer.

The protein resides in the cytoplasm. The catalysed reaction is an N-acyl-L-alpha-aminoacyl-tRNA + H2O = an N-acyl-L-amino acid + a tRNA + H(+). Hydrolyzes ribosome-free peptidyl-tRNAs (with 1 or more amino acids incorporated), which drop off the ribosome during protein synthesis, or as a result of ribosome stalling. In terms of biological role, catalyzes the release of premature peptidyl moieties from peptidyl-tRNA molecules trapped in stalled 50S ribosomal subunits, and thus maintains levels of free tRNAs and 50S ribosomes. The protein is Peptidyl-tRNA hydrolase of Pectobacterium atrosepticum (strain SCRI 1043 / ATCC BAA-672) (Erwinia carotovora subsp. atroseptica).